Reading from the N-terminus, the 1103-residue chain is Mediator of RNA polymerase II transcription subunit 14 (1103 aa).

Disordered stretches follow at residues 22 to 61 (LNGV…GSDE) and 1043 to 1067 (TTPK…PAIR). Polar residues predominate over residues 23–36 (NGVSSAPAGSSQLG).

Belongs to the Mediator complex subunit 14 family. Component of the Mediator complex.

Its subcellular location is the nucleus. Component of the Mediator complex, a coactivator involved in the regulated transcription of nearly all RNA polymerase II-dependent genes. Mediator functions as a bridge to convey information from gene-specific regulatory proteins to the basal RNA polymerase II transcription machinery. Mediator is recruited to promoters by direct interactions with regulatory proteins and serves as a scaffold for the assembly of a functional preinitiation complex with RNA polymerase II and the general transcription factors. The sequence is that of Mediator of RNA polymerase II transcription subunit 14 (rgr1) from Emericella nidulans (strain FGSC A4 / ATCC 38163 / CBS 112.46 / NRRL 194 / M139) (Aspergillus nidulans).